An 847-amino-acid polypeptide reads, in one-letter code: uncharacterized protein (847 aa).

This is an uncharacterized protein from Penicillium chrysogenum virus (isolate Caston/2003) (PcV).